Consider the following 218-residue polypeptide: C-type lectin domain family 2 member H (218 aa).

Residues Met-1 to Cys-52 lie on the Cytoplasmic side of the membrane. Residues Cys-53–Val-73 form a helical; Signal-anchor for type II membrane protein membrane-spanning segment. Over Arg-74–Val-218 the chain is Extracellular. The cysteines at positions 90 and 101 are disulfide-linked. Residues Phe-97–Ser-201 enclose the C-type lectin domain. N-linked (GlcNAc...) asparagine glycosylation occurs at Asn-110. Cys-118 and Cys-200 are oxidised to a cystine.

In terms of tissue distribution, detected in ileum, liver, kidney and in IL2-activated natural killer cells.

The protein resides in the cell membrane. Lectin-type cell surface receptor. This Mus musculus (Mouse) protein is C-type lectin domain family 2 member H (Clec2h).